The chain runs to 215 residues: Interleukin-12 subunit alpha (215 aa).

Positions 1–22 (MCSSRCLLFLATLAFLIHLSLA) are cleaved as a signal peptide. Cystine bridges form between cysteine 33-cysteine 106, cysteine 60-cysteine 192, and cysteine 81-cysteine 119. Asparagine 89 carries N-linked (GlcNAc...) asparagine glycosylation.

Belongs to the IL-6 superfamily. As to quaternary structure, heterodimer with IL12B; disulfide-linked. This heterodimer is known as interleukin IL-12. Heterodimer with EBI3/IL27B; not disulfide-linked. This heterodimer is known as interleukin IL-35. Interacts with NBR1; this interaction promotes IL-12 secretion.

The protein resides in the secreted. Heterodimerizes with IL12B to form the IL-12 cytokine or with EBI3/IL27B to form the IL-35 cytokine. IL-12 is primarily produced by professional antigen-presenting cells (APCs) such as B-cells and dendritic cells (DCs) as well as macrophages and granulocytes and regulates T-cell and natural killer-cell responses, induces the production of interferon-gamma (IFN-gamma), favors the differentiation of T-helper 1 (Th1) cells and is an important link between innate resistance and adaptive immunity. Mechanistically, exerts its biological effects through a receptor composed of IL12R1 and IL12R2 subunits. Binding to the receptor results in the rapid tyrosine phosphorylation of a number of cellular substrates including the JAK family kinases TYK2 and JAK2. In turn, recruited STAT4 gets phosphorylated and translocates to the nucleus where it regulates cytokine/growth factor responsive genes. As part of IL-35, plays essential roles in maintaining the immune homeostasis of the liver microenvironment and also functions as an immune-suppressive cytokine. Mediates biological events through unconventional receptors composed of IL12RB2 and gp130/IL6ST heterodimers or homodimers. Signaling requires the transcription factors STAT1 and STAT4, which form a unique heterodimer that binds to distinct DNA sites. This is Interleukin-12 subunit alpha (IL12A) from Sigmodon hispidus (Hispid cotton rat).